Here is an 800-residue protein sequence, read N- to C-terminus: Protein MEI2-like 5 (800 aa).

RRM domains follow at residues 168 to 241 (RTLF…FSIP) and 253 to 326 (GTLV…PSRP). Serine 384 and serine 390 each carry phosphoserine. Disordered regions lie at residues 470–489 (GSPNARSEPSSSSVWSTSST) and 776–800 (VVDEESKNMDLLDSQLSDDDGRERS). Residues 471-488 (SPNARSEPSSSSVWSTSS) show a composition bias toward low complexity. A phosphoserine mark is found at serine 789 and serine 792.

Probable RNA-binding protein that plays a role in meiosis and vegetative growth. The sequence is that of Protein MEI2-like 5 (ML5) from Arabidopsis thaliana (Mouse-ear cress).